A 570-amino-acid polypeptide reads, in one-letter code: Cation/calcium exchanger 1 (570 aa).

Transmembrane regions (helical) follow at residues 14–34 (LSLL…ASQT), 97–117 (SPVL…YLLG), 141–161 (MAGV…SSVV), 176–196 (ILGG…VLIG), 212–232 (VFLL…KVTI), 235–255 (ALCY…SHFF), 344–364 (CAVV…CSHY), 371–391 (LILY…AYLT), 401–421 (FSLV…YMIA), 427–447 (LLIS…LTVL), 479–499 (YAGP…ISSL), 513–533 (SLLE…VIMP), and 546–566 (GLLA…FGVL).

The protein belongs to the Ca(2+):cation antiporter (CaCA) (TC 2.A.19) family. Cation/calcium exchanger (CCX) subfamily. In terms of tissue distribution, expressed in roots, leaves, stems and flowers.

It is found in the vacuole membrane. Functionally, vacuolar membrane-localized H(+)-dependent K(+) and Na(+) transporter. The sequence is that of Cation/calcium exchanger 1 (CCX1) from Arabidopsis thaliana (Mouse-ear cress).